The following is a 223-amino-acid chain: ATP-dependent Clp protease proteolytic subunit 2 (223 aa).

The tract at residues 1–40 (MHAGSGNDMDITRMTPTRLDDEPDAPEPETREDDNKTLNS) is disordered. The segment covering 21-32 (DEPDAPEPETRE) has biased composition (acidic residues). The active-site Nucleophile is Ser124. Residue His149 is part of the active site.

Belongs to the peptidase S14 family. Fourteen ClpP subunits assemble into 2 heptameric rings which stack back to back to give a disk-like structure with a central cavity, resembling the structure of eukaryotic proteasomes.

The protein localises to the cytoplasm. The enzyme catalyses Hydrolysis of proteins to small peptides in the presence of ATP and magnesium. alpha-casein is the usual test substrate. In the absence of ATP, only oligopeptides shorter than five residues are hydrolyzed (such as succinyl-Leu-Tyr-|-NHMec, and Leu-Tyr-Leu-|-Tyr-Trp, in which cleavage of the -Tyr-|-Leu- and -Tyr-|-Trp bonds also occurs).. Cleaves peptides in various proteins in a process that requires ATP hydrolysis. Has a chymotrypsin-like activity. Plays a major role in the degradation of misfolded proteins. The polypeptide is ATP-dependent Clp protease proteolytic subunit 2 (Gluconobacter oxydans (strain 621H) (Gluconobacter suboxydans)).